The sequence spans 244 residues: Nonsense-mediated decay protein 4 (244 aa).

The protein localises to the cytoplasm. In terms of biological role, involved in nonsense-mediated decay of mRNAs containing premature stop codons. This Kluyveromyces lactis (strain ATCC 8585 / CBS 2359 / DSM 70799 / NBRC 1267 / NRRL Y-1140 / WM37) (Yeast) protein is Nonsense-mediated decay protein 4 (NMD4).